A 413-amino-acid chain; its full sequence is Arogenate dehydratase/prephenate dehydratase 6, chloroplastic (413 aa).

Residues 1–44 (MKALSSSSPILGASQPATATALIARSGRSEWQSSCAILTSKVIS) constitute a chloroplast transit peptide. A Prephenate dehydratase domain is found at 117 to 294 (RVAYQGVPGA…NVTRFVMLAR (178 aa)). In terms of domain architecture, ACT spans 308-399 (SIVFAHEKGT…SFLRVLGSYP (92 aa)).

As to expression, expressed in roots, leaves, stems, flowers and siliques.

It is found in the plastid. The protein localises to the chloroplast stroma. The catalysed reaction is L-arogenate + H(+) = L-phenylalanine + CO2 + H2O. It catalyses the reaction prephenate + H(+) = 3-phenylpyruvate + CO2 + H2O. The protein operates within amino-acid biosynthesis; L-phenylalanine biosynthesis; L-phenylalanine from L-arogenate: step 1/1. Its pathway is amino-acid biosynthesis; L-phenylalanine biosynthesis; phenylpyruvate from prephenate: step 1/1. Converts the prephenate produced from the shikimate-chorismate pathway into phenylalanine. Dehydratase that uses arogenate and prephenate as substrates. Utilzes more efficiently arogenate than prephenate. The chain is Arogenate dehydratase/prephenate dehydratase 6, chloroplastic from Arabidopsis thaliana (Mouse-ear cress).